A 188-amino-acid chain; its full sequence is Protein-arginine kinase activator protein (188 aa).

Short sequence motifs (CXXC metal binding motif) lie at residues 3 to 6, 29 to 32, 87 to 90, and 105 to 108; these read CENC, CQTC, CPSC, and CANC. The 36-residue stretch at 145 to 180 folds into the UVR domain; that stretch reads KRKIEEKNEYLKKLIEIQDFEEAAIVRDEIKALKAE.

In terms of assembly, interacts with McsB and CtsR; the CXXC motifs are needed for the binding.

Activates the phosphorylation activity of the protein-arginine kinase McsB. May function as an important molecule for oxidative tolerance in various types of stress including that of heavy metals. Binds to Cu(2+), Zn(2+), Co(2+) and Cd(2+) via its CXXC metal binding motifs. This chain is Protein-arginine kinase activator protein, found in Staphylococcus aureus (strain NCTC 8325 / PS 47).